We begin with the raw amino-acid sequence, 64 residues long: Large ribosomal subunit protein bL35 (64 aa).

The interval Met-1–Lys-21 is disordered. The segment covering Ala-10–Lys-21 has biased composition (basic residues).

This sequence belongs to the bacterial ribosomal protein bL35 family.

The chain is Large ribosomal subunit protein bL35 from Nautilia profundicola (strain ATCC BAA-1463 / DSM 18972 / AmH).